The following is a 451-amino-acid chain: Serine/threonine-protein phosphatase 2A 55 kDa regulatory subunit B delta isoform (451 aa).

WD repeat units follow at residues Ala-30 to Pro-69, Glu-95 to Glu-136, Ala-179 to Asn-217, Glu-228 to Arg-268, Glu-287 to Glu-325, Glu-342 to Leu-383, and Asp-418 to Asn-451.

The protein belongs to the phosphatase 2A regulatory subunit B family. PP2A consists of a common heterodimeric core enzyme, composed of a 36 kDa catalytic subunit (subunit C) and a 65 kDa constant regulatory subunit (PR65 or subunit A), that associates with a variety of regulatory subunits.

The protein localises to the cytoplasm. Its function is as follows. Substrate-recognition subunit of protein phosphatase 2A (PP2A) that plays a key role in cell cycle by controlling mitosis entry and exit. The activity of PP2A complexes containing PPP2R2D (PR55-delta) fluctuate during the cell cycle: the activity is high in interphase and low in mitosis. In Gallus gallus (Chicken), this protein is Serine/threonine-protein phosphatase 2A 55 kDa regulatory subunit B delta isoform (PPP2R2D).